Here is a 910-residue protein sequence, read N- to C-terminus: DNA mismatch repair protein MutS (910 aa).

Residue 607–614 (GPNMAGKS) participates in ATP binding.

Belongs to the DNA mismatch repair MutS family.

Functionally, this protein is involved in the repair of mismatches in DNA. It is possible that it carries out the mismatch recognition step. This protein has a weak ATPase activity. The chain is DNA mismatch repair protein MutS from Geobacillus thermodenitrificans (strain NG80-2).